The chain runs to 522 residues: Colicin-E1 (522 aa).

Disordered regions lie at residues 26–52 (NGTP…AAIH) and 136–165 (EEKA…REKA). Positions 30–42 (DGSGSGGGGGKGG) are enriched in gly residues. Helical transmembrane passes span 471–487 (AADA…FSLL) and 494–510 (IWGI…YIDK).

This sequence belongs to the channel forming colicin family.

It localises to the cell membrane. This colicin is a channel-forming colicin. This class of transmembrane toxins depolarize the cytoplasmic membrane, leading to dissipation of cellular energy. Its function is as follows. Colicins are polypeptide toxins produced by and active against E.coli and closely related bacteria. In Escherichia coli, this protein is Colicin-E1 (cea).